The primary structure comprises 210 residues: Thymidylate kinase (210 aa).

Residue 11-18 (GGEGAGKT) participates in ATP binding.

The protein belongs to the thymidylate kinase family.

The catalysed reaction is dTMP + ATP = dTDP + ADP. Phosphorylation of dTMP to form dTDP in both de novo and salvage pathways of dTTP synthesis. This is Thymidylate kinase (tmk) from Halalkalibacterium halodurans (strain ATCC BAA-125 / DSM 18197 / FERM 7344 / JCM 9153 / C-125) (Bacillus halodurans).